The chain runs to 232 residues: Large ribosomal subunit protein uL1 (232 aa).

Belongs to the universal ribosomal protein uL1 family. As to quaternary structure, part of the 50S ribosomal subunit.

Its function is as follows. Binds directly to 23S rRNA. The L1 stalk is quite mobile in the ribosome, and is involved in E site tRNA release. In terms of biological role, protein L1 is also a translational repressor protein, it controls the translation of the L11 operon by binding to its mRNA. The polypeptide is Large ribosomal subunit protein uL1 (Aliarcobacter butzleri (strain RM4018) (Arcobacter butzleri)).